Here is a 361-residue protein sequence, read N- to C-terminus: Isopentenyl-diphosphate delta-isomerase (361 aa).

Residue 12-13 participates in substrate binding; that stretch reads RK. FMN contacts are provided by residues Ser-70, 71 to 73, Ser-101, and Asn-130; that span reads SMT. 101–103 contributes to the substrate binding site; the sequence is SMR. Residue Gln-165 participates in substrate binding. Glu-166 is a Mg(2+) binding site. FMN contacts are provided by residues Lys-197 and 310-311; that span reads AG.

The protein belongs to the IPP isomerase type 2 family. In terms of assembly, homooctamer. Dimer of tetramers. FMN serves as cofactor. It depends on NADPH as a cofactor. Mg(2+) is required as a cofactor.

It localises to the cytoplasm. It catalyses the reaction isopentenyl diphosphate = dimethylallyl diphosphate. In terms of biological role, involved in the biosynthesis of isoprenoids. Catalyzes the 1,3-allylic rearrangement of the homoallylic substrate isopentenyl (IPP) to its allylic isomer, dimethylallyl diphosphate (DMAPP). This is Isopentenyl-diphosphate delta-isomerase from Chlorobium luteolum (strain DSM 273 / BCRC 81028 / 2530) (Pelodictyon luteolum).